Here is a 366-residue protein sequence, read N- to C-terminus: Carbamoyl phosphate synthase small chain (366 aa).

Residues 1 to 171 (MQSKRYLVLE…KTPYVSTGKD (171 aa)) are CPSase. L-glutamine-binding residues include Ser-47, Gly-221, and Gly-223. One can recognise a Glutamine amidotransferase type-1 domain in the interval 173–360 (SVVLVDFGKK…VAMMTNFKEK (188 aa)). The active-site Nucleophile is Cys-248. Leu-249, Gln-252, Asn-290, Gly-292, and Tyr-293 together coordinate L-glutamine. Catalysis depends on residues His-333 and Glu-335.

The protein belongs to the CarA family. As to quaternary structure, composed of two chains; the small (or glutamine) chain promotes the hydrolysis of glutamine to ammonia, which is used by the large (or ammonia) chain to synthesize carbamoyl phosphate. Tetramer of heterodimers (alpha,beta)4.

It catalyses the reaction hydrogencarbonate + L-glutamine + 2 ATP + H2O = carbamoyl phosphate + L-glutamate + 2 ADP + phosphate + 2 H(+). It carries out the reaction L-glutamine + H2O = L-glutamate + NH4(+). Its pathway is amino-acid biosynthesis; L-arginine biosynthesis; carbamoyl phosphate from bicarbonate: step 1/1. It participates in pyrimidine metabolism; UMP biosynthesis via de novo pathway; (S)-dihydroorotate from bicarbonate: step 1/3. In terms of biological role, small subunit of the glutamine-dependent carbamoyl phosphate synthetase (CPSase). CPSase catalyzes the formation of carbamoyl phosphate from the ammonia moiety of glutamine, carbonate, and phosphate donated by ATP, constituting the first step of 2 biosynthetic pathways, one leading to arginine and/or urea and the other to pyrimidine nucleotides. The small subunit (glutamine amidotransferase) binds and cleaves glutamine to supply the large subunit with the substrate ammonia. The sequence is that of Carbamoyl phosphate synthase small chain from Staphylococcus aureus (strain COL).